Reading from the N-terminus, the 319-residue chain is Acetyl-coenzyme A carboxylase carboxyl transferase subunit alpha (319 aa).

A CoA carboxyltransferase C-terminal domain is found at 32 to 293 (NVDAEVRALR…KAVLLNELDA (262 aa)).

The protein belongs to the AccA family. In terms of assembly, acetyl-CoA carboxylase is a heterohexamer composed of biotin carboxyl carrier protein (AccB), biotin carboxylase (AccC) and two subunits each of ACCase subunit alpha (AccA) and ACCase subunit beta (AccD).

The protein resides in the cytoplasm. It carries out the reaction N(6)-carboxybiotinyl-L-lysyl-[protein] + acetyl-CoA = N(6)-biotinyl-L-lysyl-[protein] + malonyl-CoA. The protein operates within lipid metabolism; malonyl-CoA biosynthesis; malonyl-CoA from acetyl-CoA: step 1/1. Functionally, component of the acetyl coenzyme A carboxylase (ACC) complex. First, biotin carboxylase catalyzes the carboxylation of biotin on its carrier protein (BCCP) and then the CO(2) group is transferred by the carboxyltransferase to acetyl-CoA to form malonyl-CoA. The chain is Acetyl-coenzyme A carboxylase carboxyl transferase subunit alpha from Xanthomonas campestris pv. campestris (strain B100).